We begin with the raw amino-acid sequence, 291 residues long: uncharacterized protein (291 aa).

The next 4 membrane-spanning stretches (helical) occupy residues Ile13 to Ile33, Ile84 to Ile104, Leu111 to Ile131, and Leu219 to Leu239.

It localises to the cell membrane. This is an uncharacterized protein from Ureaplasma parvum serovar 3 (strain ATCC 700970).